The primary structure comprises 320 residues: Putative thiosulfate sulfurtransferase (320 aa).

The signal sequence occupies residues 1 to 37; sequence MSVRSLRWPRQKAFLAVISLVVAVLLAVPGWLTPATA. Rhodanese domains follow at residues 56-166 and 194-315; these read NNKQ…PVTK and LTGK…PVET. The active-site Cysteine persulfide intermediate is the C274.

The protein localises to the periplasm. The catalysed reaction is thiosulfate + hydrogen cyanide = thiocyanate + sulfite + 2 H(+). In terms of biological role, may be a sulfotransferase involved in the transport of sulfate. Displays very low rhodanese activity. This chain is Putative thiosulfate sulfurtransferase (rhdA), found in Synechococcus elongatus (strain ATCC 33912 / PCC 7942 / FACHB-805) (Anacystis nidulans R2).